The following is a 96-amino-acid chain: Co-chaperonin GroES 2 (96 aa).

This sequence belongs to the GroES chaperonin family. As to quaternary structure, heptamer of 7 subunits arranged in a ring. Interacts with the chaperonin GroEL.

It is found in the cytoplasm. Its function is as follows. Together with the chaperonin GroEL, plays an essential role in assisting protein folding. The GroEL-GroES system forms a nano-cage that allows encapsulation of the non-native substrate proteins and provides a physical environment optimized to promote and accelerate protein folding. GroES binds to the apical surface of the GroEL ring, thereby capping the opening of the GroEL channel. The polypeptide is Co-chaperonin GroES 2 (Vibrio cholerae serotype O1 (strain ATCC 39315 / El Tor Inaba N16961)).